Consider the following 601-residue polypeptide: Amino-acid acetyltransferase, mitochondrial (601 aa).

The N-acetyltransferase domain occupies 401-558; that stretch reads FTMDNLIASK…KKKQNNKKKK (158 aa).

It belongs to the acetyltransferase family.

The protein localises to the mitochondrion. It carries out the reaction L-glutamate + acetyl-CoA = N-acetyl-L-glutamate + CoA + H(+). It participates in amino-acid biosynthesis; L-arginine biosynthesis; N(2)-acetyl-L-ornithine from L-glutamate: step 1/4. Functionally, N-acetylglutamate synthase involved in arginine biosynthesis. This chain is Amino-acid acetyltransferase, mitochondrial (ARG2), found in Lodderomyces elongisporus (strain ATCC 11503 / CBS 2605 / JCM 1781 / NBRC 1676 / NRRL YB-4239) (Yeast).